A 184-amino-acid chain; its full sequence is Ribosome-recycling factor (184 aa).

This sequence belongs to the RRF family.

It localises to the cytoplasm. In terms of biological role, responsible for the release of ribosomes from messenger RNA at the termination of protein biosynthesis. May increase the efficiency of translation by recycling ribosomes from one round of translation to another. In Acinetobacter baumannii (strain AB307-0294), this protein is Ribosome-recycling factor.